Reading from the N-terminus, the 780-residue chain is Neutral ceramidase (780 aa).

Topologically, residues 1–12 are cytoplasmic; that stretch reads MAKRTFSNLETF. The chain crosses the membrane as a helical; Signal-anchor for type II membrane protein span at residues 13–33; the sequence is LIFLLVMMSAITVALLSLLFI. The Lumenal segment spans residues 34 to 780; it reads TSGTIENHKD…TSPAFEVVTI (747 aa). The tract at residues 47 to 90 is disordered; the sequence is HFFSTTQSPPATQGSTAAQRSTATQHSTATQSSTATQTSPVPLT. Residues 57-85 are compositionally biased toward low complexity; the sequence is ATQGSTAAQRSTATQHSTATQSSTATQTS. O-linked (GalNAc...) threonine glycosylation is present at Thr62. Ser67 carries an O-linked (GalNAc...) serine glycan. O-linked (GalNAc...) threonine glycans are attached at residues Thr68 and Thr70. An O-linked (GalNAc...) serine glycan is attached at Ser73. O-linked (GalNAc...) threonine glycans are attached at residues Thr74 and Thr76. Ser78 and Ser79 each carry an O-linked (GalNAc...) serine glycan. O-linked (GalNAc...) threonine glycans are attached at residues Thr80, Thr82, and Thr84. An N-linked (GlcNAc...) asparagine glycan is attached at Asn98. Position 134 (Leu134) interacts with Ca(2+). N-linked (GlcNAc...) asparagine glycosylation is present at Asn151. His194 is a Zn(2+) binding site. The N-linked (GlcNAc...) asparagine glycan is linked to Asn217. His303 is a Zn(2+) binding site. Residue Asn308 is glycosylated (N-linked (GlcNAc...) asparagine). The active-site Nucleophile is the Ser354. 2 disulfide bridges follow: Cys362–Cys376 and Cys369–Cys384. 2 N-linked (GlcNAc...) asparagine glycosylation sites follow: Asn440 and Asn468. Cys448 and Cys498 are joined by a disulfide. Glu540 is a binding site for Zn(2+). Residue Asn564 is glycosylated (N-linked (GlcNAc...) asparagine). Zn(2+) is bound at residue Tyr579. The Ca(2+) site is built by Asp712, Ser714, and Thr717. Asn730 carries N-linked (GlcNAc...) asparagine glycosylation. Positions 770-780 are required for correct folding and localization; that stretch reads GTSPAFEVVTI. Thr779 is a glycosylation site (O-linked (GalNAc...) threonine).

This sequence belongs to the neutral ceramidase family. Requires Zn(2+) as cofactor. In terms of processing, proteolytic cleavage of the N-terminus removes the signal-anchor and produces a soluble form of the protein. N-glycosylated. Required for enzyme activity. Post-translationally, O-glycosylated. Required to retain it as a type II membrane protein at the cell surface. In terms of processing, phosphorylated. May prevent ubiquitination and subsequent degradation. Ubiquitinated, leading to its degradation by the proteasome. Ubiquitination is triggered by nitric oxide. Primarily expressed in intestine. Ubiquitously expressed with higher levels in kidney, skeletal muscle and heart. The ubiquitous expression observed for ASAH2 might be an experimental artifact due to the paralog ASAH2B.

The protein localises to the cell membrane. It localises to the membrane raft. The protein resides in the membrane. Its subcellular location is the caveola. It is found in the golgi apparatus membrane. The protein localises to the mitochondrion. It localises to the secreted. The protein resides in the extracellular exosome. It carries out the reaction an N-acylsphing-4-enine + H2O = sphing-4-enine + a fatty acid. The enzyme catalyses N-dodecanoylsphing-4-enine + H2O = dodecanoate + sphing-4-enine. The catalysed reaction is N-hexadecanoylsphing-4-enine + H2O = sphing-4-enine + hexadecanoate. It catalyses the reaction N-octanoylsphing-4-enine + H2O = octanoate + sphing-4-enine. It carries out the reaction N-(hexanoyl)sphing-4-enine + H2O = hexanoate + sphing-4-enine. The enzyme catalyses N-octadecanoylsphing-4-enine + H2O = sphing-4-enine + octadecanoate. The catalysed reaction is N-tetradecanoylsphing-4-enine + H2O = tetradecanoate + sphing-4-enine. It catalyses the reaction N-(9Z-octadecenoyl)-sphing-4-enine + H2O = sphing-4-enine + (9Z)-octadecenoate. It carries out the reaction N-(15Z-tetracosenoyl)-sphing-4-enine + H2O = (15Z)-tetracosenoate + sphing-4-enine. The enzyme catalyses sphinganine + hexadecanoate = N-hexadecanoylsphinganine + H2O. The catalysed reaction is N-(octadecanoyl)-sphinganine + H2O = sphinganine + octadecanoate. The protein operates within lipid metabolism; sphingolipid metabolism. Its activity is regulated as follows. Inhibited by dithiothreitol (DTT) and 2-mercaptoethanol. Activity is mildly stimulated by Ca(2+) and Mg(2+), but is not inhibited by EDTA. Activity is inhibited by millimolar levels of Fe(2+), Zn(2+) and Cu(2+). Inhibited by cholesterol. Functionally, plasma membrane ceramidase that hydrolyzes sphingolipid ceramides into sphingosine and free fatty acids at neutral pH. Ceramides, sphingosine, and its phosphorylated form sphingosine-1-phosphate are bioactive lipids that mediate cellular signaling pathways regulating several biological processes including cell proliferation, apoptosis and differentiation. Also catalyzes the reverse reaction allowing the synthesis of ceramides from fatty acids and sphingosine. Together with sphingomyelinase, participates in the production of sphingosine and sphingosine-1-phosphate from the degradation of sphingomyelin, a sphingolipid enriched in the plasma membrane of cells. Also participates in the hydrolysis of ceramides from the extracellular milieu allowing the production of sphingosine-1-phosphate inside and outside cells. This is the case for instance with the digestion of dietary sphingolipids in the intestinal tract. The polypeptide is Neutral ceramidase (ASAH2) (Homo sapiens (Human)).